Reading from the N-terminus, the 391-residue chain is Phosphoglycerate kinase (391 aa).

Substrate is bound by residues 21–23, arginine 36, 59–62, arginine 113, and arginine 146; these read DLN and HLGR. ATP-binding positions include lysine 197, glutamate 319, and 345-348; that span reads GGDT.

This sequence belongs to the phosphoglycerate kinase family. In terms of assembly, monomer.

It is found in the cytoplasm. The enzyme catalyses (2R)-3-phosphoglycerate + ATP = (2R)-3-phospho-glyceroyl phosphate + ADP. The protein operates within carbohydrate degradation; glycolysis; pyruvate from D-glyceraldehyde 3-phosphate: step 2/5. The chain is Phosphoglycerate kinase from Shewanella baltica (strain OS185).